The primary structure comprises 379 residues: Cytochrome b (379 aa).

The next 4 helical transmembrane spans lie at 33–53 (FGSLLGICLMIQILTGLFLAM), 77–98 (WLIRYLHANGASMFFICLFIHV), 113–133 (WNIGIILFFTTMATAFVGYVL), and 178–198 (FFAFHFILPFIITAFVLVHLL). Heme b contacts are provided by histidine 83 and histidine 97. Positions 182 and 196 each coordinate heme b. A ubiquinone is bound at residue histidine 201. Helical transmembrane passes span 226 to 246 (IKDLLGILLLLMALMILALFF), 288 to 308 (LGGVLALILSILILAAFPLLN), 320 to 340 (ITQTIYWTFIANLLILTWIGG), and 347 to 367 (FTMXGXIASITYFIIIIILMP).

It belongs to the cytochrome b family. The cytochrome bc1 complex contains 11 subunits: 3 respiratory subunits (MT-CYB, CYC1 and UQCRFS1), 2 core proteins (UQCRC1 and UQCRC2) and 6 low-molecular weight proteins (UQCRH/QCR6, UQCRB/QCR7, UQCRQ/QCR8, UQCR10/QCR9, UQCR11/QCR10 and a cleavage product of UQCRFS1). This cytochrome bc1 complex then forms a dimer. Requires heme b as cofactor.

Its subcellular location is the mitochondrion inner membrane. Functionally, component of the ubiquinol-cytochrome c reductase complex (complex III or cytochrome b-c1 complex) that is part of the mitochondrial respiratory chain. The b-c1 complex mediates electron transfer from ubiquinol to cytochrome c. Contributes to the generation of a proton gradient across the mitochondrial membrane that is then used for ATP synthesis. This is Cytochrome b (MT-CYB) from Necromys amoenus (Pleasant bolo mouse).